The primary structure comprises 157 residues: Regenerating islet-derived protein 4 (157 aa).

An N-terminal signal peptide occupies residues 1–22; the sequence is MASKCVRLLLLLSWVAGPEVLS. A disulfide bridge links C29 with C40. Residues 36 to 154 form the C-type lectin domain; the sequence is YRSHCYGYFR…CTKRQHFLCK (119 aa). N-linked (GlcNAc...) asparagine glycans are attached at residues N49, N62, and N101. 2 disulfides stabilise this stretch: C57/C153 and C128/C145. A carbohydrate is bound by residues 97 to 101 and 134 to 136; these read DPQKN and KDK.

It is found in the secreted. Calcium-independent lectin displaying mannose-binding specificity and able to maintain carbohydrate recognition activity in an acidic environment. May be involved in inflammatory and metaplastic responses of the gastrointestinal epithelium. This is Regenerating islet-derived protein 4 (Reg4) from Rattus norvegicus (Rat).